The following is a 972-amino-acid chain: FHF complex subunit HOOK-interacting protein 1B (972 aa).

Disordered stretches follow at residues Ala-465–Pro-496, Ser-510–Leu-547, Ser-573–Trp-642, and Ser-710–Pro-733. Ser-467 carries the post-translational modification Phosphoserine. Positions Gly-479–Val-490 are enriched in low complexity. A phosphoserine mark is found at Ser-510, Ser-523, Ser-529, and Ser-533. A compositionally biased stretch (low complexity) spans Ser-523–Gly-535. Residues Gly-618–Pro-627 are compositionally biased toward gly residues. Ser-859 and Ser-897 each carry phosphoserine.

Belongs to the FHIP family. In terms of assembly, component of the FTS/Hook/FHIP complex (FHF complex), composed of AKTIP/FTS, FHIP1B, and one or more members of the Hook family of proteins HOOK1, HOOK2, and HOOK3. The FHF complex associates with the homotypic vesicular sorting complex (the HOPS complex).

Component of the FTS/Hook/FHIP complex (FHF complex). The FHF complex may function to promote vesicle trafficking and/or fusion via the homotypic vesicular protein sorting complex (the HOPS complex). FHF complex promotes the distribution of AP-4 complex to the perinuclear area of the cell. This Pongo abelii (Sumatran orangutan) protein is FHF complex subunit HOOK-interacting protein 1B (FHIP1B).